We begin with the raw amino-acid sequence, 368 residues long: FAD-dependent monooxygenase phomE (368 aa).

Residue Ala11 coordinates FAD. Catalysis depends on residues Arg140 and Tyr178. Asp249 and Gly262 together coordinate FAD.

Belongs to the paxM FAD-dependent monooxygenase family. In terms of assembly, monomer. It depends on FAD as a cofactor.

FAD-dependent monooxygenase; part of the gene cluster that mediates the biosynthesis of the phomopsins, a group of hexapeptide mycotoxins which infects lupins and causes lupinosis disease in livestock. The role of phomE within the phomopsins biosynthesis pathway has still to be determined. The pathway starts with the processing of the precursor phomA by several endopeptidases including kexin proteases as well as the cluster-specific S41 family peptidase phomP1 and the oligopeptidase phomG to produce 10 identical copies of the hexapeptide Tyr-Val-Ile-Pro-Ile-Asp. After being excised from the precursor peptide, the core peptides are cyclized and modified post-translationally by enzymes encoded within the gene cluster. The timing and order of proteolysis of the phomA precursor and PTMs are still unknown. Two tyrosinase-like enzymes, phomQ1 and phomQ2, catalyze the chlorination and hydroxylation of Tyr, respectively. PhomYb, is proposed to be involved in the construction of the macrocyclic structure. The other 4 ustYa family proteins may be involved in PTMs that generate the unique structure of phomopsin A. PhomYa is required for the hydroxylation of C-beta of Tyr. PhomYc, phomYd, and phomYe are responsible for the biosynthesis of 2,3-dehydroisoleucine (dIle), 2,3-dehydroaspartic acid (dAsp), and 3,4-dehydroproline (dPro), respectively. While dIle formation by phomYc is indispensable for the installation of dAsp by phomYd, the order of the other PTMs have not been elucidated yet. Most of the biosynthetic enzymes likely have broad substrate specificity, and thus, there might be a metabolic grid from a precursor to phomopsin A. The enzyme(s) responsible for the biosynthesis of 3,4-dehydrovaline (dVal) have also not been identified yet. Finally, phomM acts as an S-adenosylmethionine-dependent alpha-N-methyltransferase that catalyzes two successive N-methylation reactions, converting N-desmethyl-phomopsin A to phomopsin A and phomopsin A further to an N,N-dimethylated congener called phomopsin E. This Diaporthe leptostromiformis (Lupinosis disease fungus) protein is FAD-dependent monooxygenase phomE.